The following is a 307-amino-acid chain: Homoserine kinase (307 aa).

86 to 96 is an ATP binding site; that stretch reads PIARGLGSSAA.

The protein belongs to the GHMP kinase family. Homoserine kinase subfamily.

Its subcellular location is the cytoplasm. It carries out the reaction L-homoserine + ATP = O-phospho-L-homoserine + ADP + H(+). Its pathway is amino-acid biosynthesis; L-threonine biosynthesis; L-threonine from L-aspartate: step 4/5. In terms of biological role, catalyzes the ATP-dependent phosphorylation of L-homoserine to L-homoserine phosphate. The sequence is that of Homoserine kinase from Petrotoga mobilis (strain DSM 10674 / SJ95).